Here is a 245-residue protein sequence, read N- to C-terminus: Heat shock transcription factor (245 aa).

The DNA-binding element occupies 17 to 115 (KSGFVNRLYR…LISLITRDKS (99 aa)). The involved in trimerization stretch occupies residues 130–169 (SLQYLASCNYKQQKEINDLKDRIKTLETKYATLYEIISNA).

This sequence belongs to the HSF family. Homotrimer. Homotrimerization increases the affinity of HSF1 to DNA.

Its subcellular location is the nucleus. Its function is as follows. DNA-binding transcription factor that specifically binds heat shock promoter elements (HSE) and activates transcription. The chain is Heat shock transcription factor from Enterocytozoon bieneusi (strain H348) (Microsporidian parasite).